The chain runs to 528 residues: Atypical kinase COQ8B, mitochondrial (528 aa).

Residues 93–109 traverse the membrane as a helical segment; sequence LASFGGLAVGLGLGALA. A KxGQ motif motif is present at residues 151-154; sequence KIGQ. In terms of domain architecture, Protein kinase spans 187–419; the sequence is MMKVLEEELG…DRVLQKSQDL (233 aa). An AAAS motif motif is present at residues 212–215; sequence AAAS. Residues Ser215, Lys233, and 320–323 each bind ATP; that span reads MELA. The Proton acceptor role is filled by Asp363. ATP is bound by residues Asn368 and Asp382.

The protein belongs to the protein kinase superfamily. ADCK protein kinase family. As to quaternary structure, homodimer; homodimerizes via its transmembrane region. Interacts with COQ6 and COQ7. Interacts with the multi-subunit COQ enzyme complex, composed of at least COQ3, COQ4, COQ5, COQ6, COQ7 and COQ9. As to expression, in the kidney, expressed in glomeruli, predominantly in podocyte foot precesses, as well as in proximal tubules and collecting ducts (at protein level).

It is found in the mitochondrion membrane. Its subcellular location is the cytoplasm. The protein resides in the cytosol. It localises to the cell membrane. It participates in cofactor biosynthesis; ubiquinone biosynthesis. In terms of biological role, atypical kinase involved in the biosynthesis of coenzyme Q, also named ubiquinone, an essential lipid-soluble electron transporter for aerobic cellular respiration. Its substrate specificity is still unclear: may act as a protein kinase that mediates phosphorylation of COQ3. According to other reports, acts as a small molecule kinase, possibly a lipid kinase that phosphorylates a prenyl lipid in the ubiquinone biosynthesis pathway, as suggested by its ability to bind coenzyme Q lipid intermediates. However, the small molecule kinase activity was not confirmed by another publication. Required for podocyte migration. The polypeptide is Atypical kinase COQ8B, mitochondrial (Rattus norvegicus (Rat)).